Reading from the N-terminus, the 160-residue chain is Putative tRNA (cytidine(34)-2'-O)-methyltransferase (160 aa).

S-adenosyl-L-methionine contacts are provided by Ile-82, Gly-107, Leu-128, and Ser-136.

It belongs to the class IV-like SAM-binding methyltransferase superfamily. RNA methyltransferase TrmH family. TrmL subfamily.

It localises to the cytoplasm. It catalyses the reaction cytidine(34) in tRNA + S-adenosyl-L-methionine = 2'-O-methylcytidine(34) in tRNA + S-adenosyl-L-homocysteine + H(+). The enzyme catalyses 5-carboxymethylaminomethyluridine(34) in tRNA(Leu) + S-adenosyl-L-methionine = 5-carboxymethylaminomethyl-2'-O-methyluridine(34) in tRNA(Leu) + S-adenosyl-L-homocysteine + H(+). In terms of biological role, could methylate the ribose at the nucleotide 34 wobble position in tRNA. In Bacillus subtilis (strain 168), this protein is Putative tRNA (cytidine(34)-2'-O)-methyltransferase (cspR).